We begin with the raw amino-acid sequence, 465 residues long: Cysteine--tRNA ligase (465 aa).

Cys28 serves as a coordination point for Zn(2+). Positions 30–40 (PTVYNYIHVGN) match the 'HIGH' region motif. Zn(2+) is bound by residues Cys208, His233, and Glu237. Positions 265 to 269 (KMSKS) match the 'KMSKS' region motif. Position 268 (Lys268) interacts with ATP.

Belongs to the class-I aminoacyl-tRNA synthetase family. In terms of assembly, monomer. It depends on Zn(2+) as a cofactor.

The protein resides in the cytoplasm. The catalysed reaction is tRNA(Cys) + L-cysteine + ATP = L-cysteinyl-tRNA(Cys) + AMP + diphosphate. The polypeptide is Cysteine--tRNA ligase (Exiguobacterium sp. (strain ATCC BAA-1283 / AT1b)).